Here is a 251-residue protein sequence, read N- to C-terminus: Ubiquitin-conjugating enzyme E2 6 (251 aa).

The Cytoplasmic portion of the chain corresponds to 1–229; that stretch reads MASIQANKRL…DQDKNPGENS (229 aa). Residues 5-154 enclose the UBC core domain; it reads QANKRLTKEY…YSNFKFKNMF (150 aa). Cysteine 87 acts as the Glycyl thioester intermediate in catalysis. The span at 173–185 shows a compositional bias: basic and acidic residues; sequence AESKGAQQEENKA. Residues 173–200 are disordered; that stretch reads AESKGAQQEENKAQKLATEKATSLDDIS. The helical transmembrane segment at 230-250 threads the bilayer; the sequence is NIKSLLCLILAIAIFFVGLIM.

This sequence belongs to the ubiquitin-conjugating enzyme family.

It localises to the endoplasmic reticulum membrane. It catalyses the reaction S-ubiquitinyl-[E1 ubiquitin-activating enzyme]-L-cysteine + [E2 ubiquitin-conjugating enzyme]-L-cysteine = [E1 ubiquitin-activating enzyme]-L-cysteine + S-ubiquitinyl-[E2 ubiquitin-conjugating enzyme]-L-cysteine.. It participates in protein modification; protein ubiquitination. In terms of biological role, catalyzes the covalent attachment of ubiquitin to other proteins. Functions in degradation of misfolded or regulated proteins localized in the endoplasmic reticulum (ER) lumen or membrane via the ubiquitin-proteasome system. Cognate E2 conjugating enzyme for the DOA10 ubiquitin ligase complex, which is part of the ERAD-C pathway responsible for the rapid degradation of membrane proteins with misfolded cytoplasmic domains. The polypeptide is Ubiquitin-conjugating enzyme E2 6 (UBC6) (Kluyveromyces lactis (strain ATCC 8585 / CBS 2359 / DSM 70799 / NBRC 1267 / NRRL Y-1140 / WM37) (Yeast)).